The primary structure comprises 367 residues: Germination protease (367 aa).

The propeptide occupies 1 to 15; sequence MKEPLDLSKYSVRTD.

The protein belongs to the peptidase A25 family. Homotetramer. Post-translationally, autoproteolytically processed. The inactive tetrameric zymogen termed p46 autoprocesses to a smaller form termed p41, which is active only during spore germination.

The catalysed reaction is Endopeptidase action with P4 Glu or Asp, P1 preferably Glu &gt; Asp, P1' hydrophobic and P2' Ala.. Initiates the rapid degradation of small, acid-soluble proteins during spore germination. This Bacillus cereus (strain G9842) protein is Germination protease.